A 474-amino-acid chain; its full sequence is Glutamate--tRNA ligase (474 aa).

The 'HIGH' region signature appears at 10–20; it reads PSPTGYLHIGG. 4 residues coordinate Zn(2+): cysteine 107, cysteine 109, cysteine 134, and aspartate 136. Positions 244-248 match the 'KMSKS' region motif; sequence RLSKR. Lysine 247 contributes to the ATP binding site.

It belongs to the class-I aminoacyl-tRNA synthetase family. Glutamate--tRNA ligase type 1 subfamily. As to quaternary structure, monomer. Requires Zn(2+) as cofactor.

The protein localises to the cytoplasm. The catalysed reaction is tRNA(Glu) + L-glutamate + ATP = L-glutamyl-tRNA(Glu) + AMP + diphosphate. Functionally, catalyzes the attachment of glutamate to tRNA(Glu) in a two-step reaction: glutamate is first activated by ATP to form Glu-AMP and then transferred to the acceptor end of tRNA(Glu). The protein is Glutamate--tRNA ligase of Anaeromyxobacter dehalogenans (strain 2CP-C).